Reading from the N-terminus, the 339-residue chain is Large ribosomal subunit protein uL10 (339 aa).

The segment at 307–339 (VEEEKKEEKVEEEKEDEEASEEEALAGLSALFG) is disordered. Basic and acidic residues predominate over residues 308–318 (EEEKKEEKVEE). Over residues 319–330 (EKEDEEASEEEA) the composition is skewed to acidic residues.

The protein belongs to the universal ribosomal protein uL10 family. Part of the 50S ribosomal subunit. Forms part of the ribosomal stalk which helps the ribosome interact with GTP-bound translation factors. Forms a heptameric L10(L12)2(L12)2(L12)2 complex, where L10 forms an elongated spine to which the L12 dimers bind in a sequential fashion.

Forms part of the ribosomal stalk, playing a central role in the interaction of the ribosome with GTP-bound translation factors. The polypeptide is Large ribosomal subunit protein uL10 (Pyrococcus furiosus (strain ATCC 43587 / DSM 3638 / JCM 8422 / Vc1)).